The following is an 89-amino-acid chain: Alpha-ketoglutarate dehydrogenase subunit 4, mitochondrial (89 aa).

The protein belongs to the alpha-ketoglutarate dehydrogenase component 4 family. In terms of assembly, component of the 2-oxoglutarate dehydrogenase complex (OGDC), also called alpha-ketoglutarate dehydrogenase (KGDH) complex. The copmplex is composed of the catalytic subunits OGDH (2-oxoglutarate dehydrogenase kgd1; also called E1 subunit), DLST (dihydrolipoamide succinyltransferase kgd2; also called E2 subunit) and DLD (dihydrolipoamide dehydrogenase dld1; also called E3 subunit), and the assembly factor KGD4. Within OGDC, interacts (via N-terminus) with E3 subunit and (via C-terminus) with the complex core formed by E1 and E2 subunits.

It is found in the mitochondrion. Its function is as follows. Molecular adapter that is necessary to a form a stable 2-oxoglutarate dehydrogenase enzyme complex (OGDC). Required for incorporation of the E3 subunit (dld1) into the E1-E2 core (kgd1-kgd2) of mitochondrial OGDC, and acting as a stability factor for the fully assembled complex. This Schizosaccharomyces pombe (strain 972 / ATCC 24843) (Fission yeast) protein is Alpha-ketoglutarate dehydrogenase subunit 4, mitochondrial (kgd4).